A 95-amino-acid polypeptide reads, in one-letter code: Acylphosphatase (95 aa).

The Acylphosphatase-like domain occupies 7–94 (AALVRITGRV…EAPAGFRITR (88 aa)). Residues Arg22 and Asn40 contribute to the active site. A compositionally biased stretch (low complexity) spans 76–88 (VASEEASSAEAPA). The interval 76 to 95 (VASEEASSAEAPAGFRITRG) is disordered.

It belongs to the acylphosphatase family.

The enzyme catalyses an acyl phosphate + H2O = a carboxylate + phosphate + H(+). In Rhizobium meliloti (strain 1021) (Ensifer meliloti), this protein is Acylphosphatase (acyP).